Reading from the N-terminus, the 438-residue chain is Histidine--tRNA ligase (438 aa).

The protein belongs to the class-II aminoacyl-tRNA synthetase family. Homodimer.

Its subcellular location is the cytoplasm. It catalyses the reaction tRNA(His) + L-histidine + ATP = L-histidyl-tRNA(His) + AMP + diphosphate + H(+). This chain is Histidine--tRNA ligase (hisS), found in Thermobifida fusca (strain YX).